The sequence spans 768 residues: UPF0313 protein VV2143 (768 aa).

The 278-residue stretch at 363–640 (AYDMIKTSVN…LHKALLRYHD (278 aa)) folds into the Radical SAM core domain. Residues Cys377, Cys381, and Cys384 each contribute to the [4Fe-4S] cluster site. Positions 674 to 768 (DARTPAQRRK…GGRNQPSRAR (95 aa)) are disordered. The span at 679-689 (AQRRKSGRHGA) shows a compositional bias: basic residues. The span at 719–731 (GGQSNSAPSRSGS) shows a compositional bias: polar residues.

Belongs to the UPF0313 family. Requires [4Fe-4S] cluster as cofactor.

The protein is UPF0313 protein VV2143 of Vibrio vulnificus (strain YJ016).